We begin with the raw amino-acid sequence, 130 residues long: Small ribosomal subunit protein uS9 (130 aa).

Belongs to the universal ribosomal protein uS9 family.

The protein is Small ribosomal subunit protein uS9 of Bacillus thuringiensis subsp. konkukian (strain 97-27).